Consider the following 102-residue polypeptide: RNA-binding protein Hfq (102 aa).

The Sm domain maps to 9–68 (DPFLNALRRERVPVSIYLVNGIKLQGQIESFDQFVILLKNTVSQMVYKHAISTVVPSRPV). Residues 63–102 (VPSRPVSHHSNNTGGGSNNYHHGSSPAPSSQPQQDSADAE) are disordered. Low complexity predominate over residues 70–102 (HHSNNTGGGSNNYHHGSSPAPSSQPQQDSADAE).

This sequence belongs to the Hfq family. As to quaternary structure, homohexamer.

Functionally, RNA chaperone that binds small regulatory RNA (sRNAs) and mRNAs to facilitate mRNA translational regulation in response to envelope stress, environmental stress and changes in metabolite concentrations. Also binds with high specificity to tRNAs. In Erwinia tasmaniensis (strain DSM 17950 / CFBP 7177 / CIP 109463 / NCPPB 4357 / Et1/99), this protein is RNA-binding protein Hfq.